A 272-amino-acid chain; its full sequence is Ribosomal RNA small subunit methyltransferase A (272 aa).

S-adenosyl-L-methionine is bound by residues N18, L20, G45, E66, D91, and N113.

Belongs to the class I-like SAM-binding methyltransferase superfamily. rRNA adenine N(6)-methyltransferase family. RsmA subfamily.

It is found in the cytoplasm. The enzyme catalyses adenosine(1518)/adenosine(1519) in 16S rRNA + 4 S-adenosyl-L-methionine = N(6)-dimethyladenosine(1518)/N(6)-dimethyladenosine(1519) in 16S rRNA + 4 S-adenosyl-L-homocysteine + 4 H(+). In terms of biological role, specifically dimethylates two adjacent adenosines (A1518 and A1519) in the loop of a conserved hairpin near the 3'-end of 16S rRNA in the 30S particle. May play a critical role in biogenesis of 30S subunits. The sequence is that of Ribosomal RNA small subunit methyltransferase A from Proteus mirabilis (strain HI4320).